The primary structure comprises 177 residues: Iron-sulfur cluster assembly protein SufA (177 aa).

An N-terminal signal peptide occupies residues methionine 1 to alanine 18. Positions 101, 169, and 171 each coordinate [4Fe-4S] cluster.

It belongs to the HesB/IscA family. In terms of assembly, homodimer. Homotetramer formation is observed in vitro.

The protein localises to the plastid. Its subcellular location is the apicoplast. The protein operates within cofactor biosynthesis; iron-sulfur cluster biosynthesis. Its function is as follows. Participates in the sulfur mobilization (SUF) pathway for iron-sulfur (Fe-S) cluster biogenesis. Involved in the pre-assembly of [4Fe-4S] clusters and their transfer to target proteins. The protein is Iron-sulfur cluster assembly protein SufA of Plasmodium falciparum (isolate 3D7).